Reading from the N-terminus, the 284-residue chain is MKLVIVSGRSGSGKSVALRVLEDLGYYCVDNLPLPLIGSLLEQLKGSNDLVAISVDVRNMPEQDKVLVQQLSNLPAGTEITSFFLNSSDKVLLKRYSETRRLHPLSKSRVSLQEAIKLEGKLLEPMSKLVDHYIDTSNLNIYDLSDQVRQILLGSVDKELVIYFESFGFKNGMPTEADFMFDVRFLPNPHWELALRPLTGLDEPVAEFLNRQPLVNKFIWQIENLLETWLPHLERNNRSYLTIAIGCTGGQHRSVYVAEQLAKRFSNGKHKVNVRHRELDNAKA.

ATP is bound at residue 8-15 (GRSGSGKS). 56-59 (DVRN) provides a ligand contact to GTP.

It belongs to the RapZ-like family.

In terms of biological role, displays ATPase and GTPase activities. In Shewanella putrefaciens (strain CN-32 / ATCC BAA-453), this protein is Nucleotide-binding protein Sputcn32_0712.